Consider the following 348-residue polypeptide: Rhodopsin (348 aa).

Met1 carries the N-acetylmethionine modification. The Extracellular portion of the chain corresponds to 1-36 (MNGTEGPNFYVPFSNKTGVVRSPFEYPQYYLAEPWQ). N-linked (GlcNAc...) asparagine glycans are attached at residues Asn2 and Asn15. Residues 37 to 61 (FSMLAAYMFLLIVLGFPINFLTLYV) traverse the membrane as a helical segment. At 62-73 (TVQHKKLRTPLN) the chain is on the cytoplasmic side. The helical transmembrane segment at 74 to 96 (YILLNLAVADLFMVFGGFTTTLY) threads the bilayer. Residues 97-110 (TSLHGYFVFGPTGC) are Extracellular-facing. Cys110 and Cys187 form a disulfide bridge. The helical transmembrane segment at 111-133 (NLEGFFATLGGEIALWSLVVLAI) threads the bilayer. A 'Ionic lock' involved in activated form stabilization motif is present at residues 134 to 136 (ERY). Residues 134 to 152 (ERYVVVCKPMSNFRFGENH) are Cytoplasmic-facing. Residues 153-173 (AIMGVAFTWVMALACAAPPLV) form a helical membrane-spanning segment. The Extracellular segment spans residues 174-202 (GWSRYIPEGMQCSCGIDYYTLKPEVNNES). Glu201 lines the Zn(2+) pocket. The helical transmembrane segment at 203 to 224 (FVIYMFVVHFTIPMIVIFFCYG) threads the bilayer. Residues 225-252 (QLVFTVKEAAAQQQESATTQKAEKEVTR) are Cytoplasmic-facing. Residues 253–274 (MVIIMVIAFLICWVPYASVAFY) traverse the membrane as a helical segment. The Extracellular portion of the chain corresponds to 275–286 (IFTHQGSNFGPI). Gln279 provides a ligand contact to Zn(2+). The chain crosses the membrane as a helical span at residues 287–308 (FMTLPAFFAKSSSIYNPVIYIM). An N6-(retinylidene)lysine modification is found at Lys296. The Cytoplasmic portion of the chain corresponds to 309–348 (MNKQFRNCMLTTLCCGKNPLGDDEASTTGSKTETSQVAPA). 2 S-palmitoyl cysteine lipidation sites follow: Cys322 and Cys323. An interaction with SAG region spans residues 330–348 (DDEASTTGSKTETSQVAPA). Ser334 bears the Phosphoserine mark. Thr335 and Thr336 each carry phosphothreonine. Residue Ser338 is modified to Phosphoserine. Residues Thr340 and Thr342 each carry the phosphothreonine modification. Ser343 is modified (phosphoserine).

It belongs to the G-protein coupled receptor 1 family. Opsin subfamily. As to quaternary structure, homodimer. May form a complex composed of RHO, GRK1 and RCVRN in a Ca(2+)-dependent manner; RCVRN prevents the interaction between GRK1 and RHO. Interacts with GRK1. Interacts (phosphorylated form) with SAG. Interacts with GNAT1. Interacts with GNAT3. SAG and G-proteins compete for a common binding site. Interacts with PRCD; the interaction promotes PRCD stability. Forms a complex with ASAP1 and ARF4. Forms a complex with ASAP1, RAB11A, Rabin8/RAB3IP, ARF4 and RAB11FIP3; the complex regulates Golgi-to-cilia rhodopsin/RHO transport in photoreceptors. In terms of processing, phosphorylated on some or all of the serine and threonine residues present in the C-terminal region. Contains one covalently linked retinal chromophore. Upon light absorption, the covalently bound 11-cis-retinal is converted to all-trans-retinal. After hydrolysis of the Schiff base and release of the covalently bound all-trans-retinal, active rhodopsin is regenerated by binding of a fresh molecule of 11-cis-retinal.

The protein localises to the membrane. It is found in the cell projection. The protein resides in the cilium. It localises to the photoreceptor outer segment. Functionally, photoreceptor required for image-forming vision at low light intensity. Required for photoreceptor cell viability after birth. Light-induced isomerization of 11-cis to all-trans retinal triggers a conformational change that activates signaling via G-proteins. Subsequent receptor phosphorylation mediates displacement of the bound G-protein alpha subunit by the arrestin SAG and terminates signaling. This chain is Rhodopsin (RHO), found in Felis catus (Cat).